A 500-amino-acid chain; its full sequence is Protein farnesyltransferase subunit beta (500 aa).

Positions 117–140 (LQNDDNNGNNNNRENNQNGGGFGG) are disordered. A compositionally biased stretch (low complexity) spans 119 to 133 (NDDNNGNNNNRENNQ). PFTB repeat units follow at residues 121 to 162 (DNNG…YVIG), 172 to 213 (REAM…SMLN), 220 to 261 (ERGV…SILN), 268 to 309 (MNSL…IIIQ), and 343 to 384 (QEYV…SLSQ). (2E,6E)-farnesyl diphosphate is bound by residues 246–249 (HGGY) and 288–291 (RTNK). Asp294 and Cys296 together coordinate Zn(2+). 297-300 (YSYW) contributes to the (2E,6E)-farnesyl diphosphate binding site. A Zn(2+)-binding site is contributed by His372. The segment at 402 to 451 (FEQPSPPINKKSTNVFTISNNNNNNNNKNNNSDDNNNNSNNNNNNSENQL) is disordered. The span at 420–449 (SNNNNNNNNKNNNSDDNNNNSNNNNNNSEN) shows a compositional bias: low complexity.

The protein belongs to the protein prenyltransferase subunit beta family. Heterodimer of fntA and fntB (farnesyltransferase). Heterodimer of an alpha and a beta subunit. Requires Zn(2+) as cofactor.

The catalysed reaction is L-cysteinyl-[protein] + (2E,6E)-farnesyl diphosphate = S-(2E,6E)-farnesyl-L-cysteinyl-[protein] + diphosphate. Catalyzes the transfer of a farnesyl moiety from farnesyl diphosphate to a cysteine at the fourth position from the C-terminus of several proteins. The beta subunit is responsible for peptide-binding. The polypeptide is Protein farnesyltransferase subunit beta (fntB) (Dictyostelium discoideum (Social amoeba)).